Consider the following 785-residue polypeptide: Uncoating factor OPG117 (785 aa).

Residue Asp-170 is part of the active site. A primase region spans residues 342–469; that stretch reads TERGDHIVWI…ELMNIINDIQ (128 aa). The 163-residue stretch at 477 to 639 folds into the SF3 helicase domain; it reads KNRELYEKTL…FSQPSGREAA (163 aa). 503 to 510 is a binding site for ATP; sequence GETATGKS.

This sequence belongs to the orthopoxvirus OPG117 family. As to quaternary structure, homomultimer; hexamer. Interacts with OPG148.

The protein localises to the host cytoplasm. Functionally, multifunctional protein required for genome uncoating and replication. Major viral uncoating protein that is required for the release of the viral genome from incoming viral cores containing the viral DNA genome. Possesses an ATPase activity that is required for hexamerization and uncoating. The sequence is that of Uncoating factor OPG117 (OPG117) from Bos taurus (Bovine).